Consider the following 438-residue polypeptide: Protein kinase PINOID (438 aa).

The segment at 1–24 is disordered; sequence MLRESDGEMSLGTTNSPISSGTES. The span at 11-24 shows a compositional bias: polar residues; it reads LGTTNSPISSGTES. In terms of domain architecture, Protein kinase spans 75–394; sequence FRLMRRIGAG…AAEVKVHPFF (320 aa). ATP is bound by residues 81–89 and Lys109; that span reads IGAGDIGTV. The Proton acceptor role is filled by Asp205. Residues 395-438 form the AGC-kinase C-terminal domain; that stretch reads KGLNFALIRTLTPPEIPSSVVKKPMKSATFSGRSSNKPAAFDYF.

This sequence belongs to the protein kinase superfamily. Ser/Thr protein kinase family. Interacts with PDK1, CML12 and PBP1. Component of a complex made of PINs (e.g. PIN1 and PIN2), MAB4/MELs (e.g. NPY1/MAB4 and NPY5/MEL1) and AGC kinases (e.g. D6PK and PID) at the plasma membrane. Binds directly to PIN2, NPY1/MAB4 and NPY5/MEL1. Autophosphorylated. Phosphorylated by PDK1. As to expression, expressed in root hair cells, shoot xylem parenchyma cells and endodermis around the vasculature. Expressed in anther primordia, vasculature of the growing flower stalk, young pedicels and bracts and developing sepals, but not in petals. In pistils, transiently expressed in the vasculature of the style and the septum, and in the integuments and funiculus of the developing ovule.

It localises to the cytoplasm. The protein resides in the cytosol. It is found in the cell membrane. It carries out the reaction L-seryl-[protein] + ATP = O-phospho-L-seryl-[protein] + ADP + H(+). The catalysed reaction is L-threonyl-[protein] + ATP = O-phospho-L-threonyl-[protein] + ADP + H(+). Its activity is regulated as follows. Activated by magnesium and PDK1. Inhibited by staurosporine. Repressed by calcium. Functionally, serine/threonine-protein kinase involved in the regulation of auxin signaling. Acts as a positive regulator of cellular auxin efflux and regulates organ development by enhancing polar auxin transport. Phosphorylates conserved serine residues in the PIN auxin efflux carriers. Phosphorylation of PIN proteins is required and sufficient for apical-basal PIN polarity that enables directional intercellular auxin fluxes, which mediate differential growth, tissue patterning and organogenesis. Phosphorylates PIN proteins (e.g. PIN1 and PIN2), especially when NPY proteins (e.g. NPY1/MAB4 and NPY5/MEL1) are recruited at the plasma membrane; this enhances the polarized localizations (apical or basal) of PINs in the cell by limiting their lateral diffusion-based escape. Acts in association with PIN1 to control the establishment of bilateral symmetry and promotion of cotyledon outgrowth. Regulates root gravitropism through modulation of PIN2-dependent basipetal auxin transport. Required for polarization of PIN3-dependent auxin transport for hypocotyl gravitropic response. The protein kinase activity of PID is essential for its auxin efflux regulatory function. PID kinase and PP2A phosphatase activities antagonistically regulate phosphorylation of PIN proteins, affecting PIN sorting. This chain is Protein kinase PINOID, found in Arabidopsis thaliana (Mouse-ear cress).